We begin with the raw amino-acid sequence, 993 residues long: MKTEDDEMEYEASKEETVSEDKDFDDGIDYRTVIKENIFTMWYKTSLHGEFATLNCVITPKDQNLLQHIFDEDIQTSEAPQTVVLQGAAGIGKTTLLKKAVLEWADGNLYQQFTHVFYLNGKEISQVKEKSFAQLISKHWPSSEGPIEQVLSKPSSLLFIIDSFDELDFSFEEPQFALCKDWTQISPVSFLISSLLRKVMLPESYLLVATRSTAWKRLVPLLQKPQRVKLSGLSKNARMDYIHHLLKDKAWATSAIYSLRMNWRLFHMCHVCHMCQMICAVLKGQVEKGGRVEETCKTSTALFTYYICSLFPRIPVGCVTLPNETLLRSLCKAAVEGIWTMKHVLYQQNLRKHELTREDILLFLDAKVLQQDTEYENCYMFTHLHVQEFFAALFYLLRENLEEQDYPSEPFENLYLLLESNHIHDPHLEQMKCFLFGLLNKDRVRQLEETFNLTISMEVREELLACLEGLEKDDSSLSQLRFQDLLHCIYETQDQEFITQALMYFQKIIVRVDEEPQLRIYSFCLKHCHTLKTMRLTARADLKNMLDTAEMCLEGAAVQVIHYWQDLFSVLHTNESLIEMDLYESRLDESLMKILNEELSHPKCKLQKLIFRAVDFLNGCQDFTFLASNKKVTHLDLKETDLGVNGLKTLCEALKCKGCKLRVLRLASCDLNVARCQKLSNALQTNRSLVFLNLSLNNLSNDGVKSLCEVLENPNSSLERLALASCGLTKAGCKVLSSALTKSKRLTHLCLSDNVLEDEGIKLLSHTLKHPQCTLQSLVLRSCSFTPIGSEHLSTALLHNRSLVHLDLGQNKLADNGVKLLCHSLQQPHCNLQELELMSCVLTSKACGDLASVLVNNSNLWSLDLGHNILDDAGLNILCDALRNPNCHVQRLGLENCGLTPGCCQDLLGILSNNKSVIQMNLMKNALDHESIKNLCKVLRSPTCKMEFLALDKKEILKKKIKKFLVDVRINNPHLVIGPECPNTESGCWWNYF.

One can recognise an NACHT domain in the interval 81-403; it reads QTVVLQGAAG…FYLLRENLEE (323 aa). ATP is bound at residue 87–94; sequence GAAGIGKT. 9 LRR repeats span residues 636 to 657, 660 to 680, 688 to 708, 717 to 738, 745 to 765, 774 to 795, 802 to 822, 831 to 852, and 859 to 879; these read DLKETDLGVNGLKTLCEALKCK, KLRVLRLASCDLNVARCQKLS, SLVFLNLSLNNLSNDGVKSLC, SLERLALASCGLTKAGCKVLSS, RLTHLCLSDNVLEDEGIKLLS, TLQSLVLRSCSFTPIGSEHLST, SLVHLDLGQNKLADNGVKLLC, NLQELELMSCVLTSKACGDLAS, and NLWSLDLGHNILDDAGLNILC.

Belongs to the NLRP family. As to expression, detected in adult ovary and testis. Detected in oocytes and in germ cell elements in seminiferous tubules in adult testis (at protein level).

It localises to the cytoplasm. May be involved in inflammation and spermatogenesis. The polypeptide is NACHT, LRR and PYD domains-containing protein 14 (Nlrp14) (Mus musculus (Mouse)).